Here is a 361-residue protein sequence, read N- to C-terminus: tRNA-specific 2-thiouridylase MnmA (361 aa).

ATP contacts are provided by residues 8–15 (AMSGGVDS) and methionine 35. Residues 95-97 (NPD) are interaction with target base in tRNA. Cysteine 100 serves as the catalytic Nucleophile. Cysteine 100 and cysteine 196 are joined by a disulfide. An ATP-binding site is contributed by glycine 124. An interaction with tRNA region spans residues 146–148 (KDQ). Cysteine 196 acts as the Cysteine persulfide intermediate in catalysis. An interaction with tRNA region spans residues 303-304 (RY).

This sequence belongs to the MnmA/TRMU family.

It localises to the cytoplasm. It carries out the reaction S-sulfanyl-L-cysteinyl-[protein] + uridine(34) in tRNA + AH2 + ATP = 2-thiouridine(34) in tRNA + L-cysteinyl-[protein] + A + AMP + diphosphate + H(+). In terms of biological role, catalyzes the 2-thiolation of uridine at the wobble position (U34) of tRNA, leading to the formation of s(2)U34. This Chlamydia pneumoniae (Chlamydophila pneumoniae) protein is tRNA-specific 2-thiouridylase MnmA.